A 402-amino-acid chain; its full sequence is Zinc finger protein CONSTANS-LIKE 14 (402 aa).

Residues cysteine 12, cysteine 15, cysteine 35, histidine 40, cysteine 55, cysteine 58, cysteine 78, and histidine 83 each coordinate Zn(2+). A B box-type 1; atypical zinc finger spans residues 12–54; sequence CEFCGERTAVLFCRADTAKLCLPCDQHVHSANLLSRKHVRSQI. The B box-type 2; atypical zinc-finger motif lies at 55-97; it reads CDNCSKEPVSVRCFTDNLVLCQECDWDVHGSCSSSATHERSAV. The disordered stretch occupies residues 287 to 322; that stretch reads SYQQEDSVHSTSTKGQETSKSNNIPAAIHSHKSSND. Positions 295–310 are enriched in polar residues; it reads HSTSTKGQETSKSNNI. The stretch at 345–372 forms a coiled coil; the sequence is VTNADLEQMAQNRDNAMQRYKEKKKTRR. Residues 357–399 enclose the CCT domain; it reads RDNAMQRYKEKKKTRRYDKTIRYETRKARAETRLRVKGRFVKA.

It belongs to the CONSTANS family.

The protein localises to the nucleus. This chain is Zinc finger protein CONSTANS-LIKE 14 (COL14), found in Arabidopsis thaliana (Mouse-ear cress).